Consider the following 327-residue polypeptide: Glycerol-3-phosphate dehydrogenase [NAD(P)+] (327 aa).

NADPH contacts are provided by S10, F11, R31, and K108. Residues K108, G136, and S138 each coordinate sn-glycerol 3-phosphate. A140 provides a ligand contact to NADPH. The sn-glycerol 3-phosphate site is built by K191, D246, S256, R257, and N258. K191 (proton acceptor) is an active-site residue. R257 provides a ligand contact to NADPH. 2 residues coordinate NADPH: L281 and E283.

This sequence belongs to the NAD-dependent glycerol-3-phosphate dehydrogenase family.

The protein localises to the cytoplasm. It carries out the reaction sn-glycerol 3-phosphate + NAD(+) = dihydroxyacetone phosphate + NADH + H(+). The enzyme catalyses sn-glycerol 3-phosphate + NADP(+) = dihydroxyacetone phosphate + NADPH + H(+). It functions in the pathway membrane lipid metabolism; glycerophospholipid metabolism. In terms of biological role, catalyzes the reduction of the glycolytic intermediate dihydroxyacetone phosphate (DHAP) to sn-glycerol 3-phosphate (G3P), the key precursor for phospholipid synthesis. The polypeptide is Glycerol-3-phosphate dehydrogenase [NAD(P)+] (Ehrlichia ruminantium (strain Gardel)).